The primary structure comprises 848 residues: Translation initiation factor IF-2 (848 aa).

The tract at residues 1–20 (MNESKGAVDSGLMSGKTERT) is disordered. The tr-type G domain occupies 346–516 (PRAPVVTVMG…LLMAELLELK (171 aa)). Residues 355–362 (GHVDHGKT) form a G1 region. 355-362 (GHVDHGKT) serves as a coordination point for GTP. The segment at 380–384 (GITQH) is G2. A G3 region spans residues 402–405 (DTPG). GTP-binding positions include 402 to 406 (DTPGH) and 456 to 459 (NKID). The interval 456-459 (NKID) is G4. The interval 492–494 (SAK) is G5.

The protein belongs to the TRAFAC class translation factor GTPase superfamily. Classic translation factor GTPase family. IF-2 subfamily.

Its subcellular location is the cytoplasm. Its function is as follows. One of the essential components for the initiation of protein synthesis. Protects formylmethionyl-tRNA from spontaneous hydrolysis and promotes its binding to the 30S ribosomal subunits. Also involved in the hydrolysis of GTP during the formation of the 70S ribosomal complex. The polypeptide is Translation initiation factor IF-2 (Ehrlichia canis (strain Jake)).